Reading from the N-terminus, the 171-residue chain is Ribosome maturation factor RimM (171 aa).

The region spanning 98–170 (EGEFYLHQII…AVQVSVPEGL (73 aa)) is the PRC barrel domain.

The protein belongs to the RimM family. As to quaternary structure, binds ribosomal protein uS19.

It localises to the cytoplasm. An accessory protein needed during the final step in the assembly of 30S ribosomal subunit, possibly for assembly of the head region. Essential for efficient processing of 16S rRNA. May be needed both before and after RbfA during the maturation of 16S rRNA. It has affinity for free ribosomal 30S subunits but not for 70S ribosomes. In Pediococcus pentosaceus (strain ATCC 25745 / CCUG 21536 / LMG 10740 / 183-1w), this protein is Ribosome maturation factor RimM.